The sequence spans 130 residues: Small ribosomal subunit protein uS8 (130 aa).

Belongs to the universal ribosomal protein uS8 family. Part of the 30S ribosomal subunit. Contacts proteins S5 and S12.

Functionally, one of the primary rRNA binding proteins, it binds directly to 16S rRNA central domain where it helps coordinate assembly of the platform of the 30S subunit. This is Small ribosomal subunit protein uS8 from Marinobacter nauticus (strain ATCC 700491 / DSM 11845 / VT8) (Marinobacter aquaeolei).